The following is an 831-amino-acid chain: Probable glucan 1,3-beta-glucosidase D (831 aa).

Composition is skewed to basic and acidic residues over residues 1–24 (MPSH…YREV), 44–56 (RRDD…RSHE), 79–93 (RSHD…RSRA), 102–115 (SRRD…EYRR), 137–151 (RDGQ…DREA), and 198–213 (QRER…LESK). 2 disordered regions span residues 1-179 (MPSH…SGSH) and 192-241 (HYDE…GQSK). The Cytoplasmic portion of the chain corresponds to 1–297 (MPSHSRSRDR…AQPPFWKRKK (297 aa)). A helical; Signal-anchor for type II membrane protein transmembrane segment spans residues 298–318 (WWIVIGVLVVVLAIVIPVAVV). The Extracellular segment spans residues 319 to 831 (MSKKHGHDDD…PSFGDLPEYY (513 aa)). N-linked (GlcNAc...) asparagine glycans are attached at residues asparagine 376, asparagine 381, asparagine 393, asparagine 410, asparagine 442, asparagine 546, and asparagine 558. Glutamate 597 serves as the catalytic Proton donor. Residues asparagine 610, asparagine 636, asparagine 669, and asparagine 689 are each glycosylated (N-linked (GlcNAc...) asparagine). The active-site Nucleophile is the glutamate 702.

It belongs to the glycosyl hydrolase 5 (cellulase A) family.

It localises to the cell membrane. The enzyme catalyses Successive hydrolysis of beta-D-glucose units from the non-reducing ends of (1-&gt;3)-beta-D-glucans, releasing alpha-glucose.. In terms of biological role, glucosidase involved in the degradation of cellulosic biomass. Active on lichenan. This Aspergillus flavus (strain ATCC 200026 / FGSC A1120 / IAM 13836 / NRRL 3357 / JCM 12722 / SRRC 167) protein is Probable glucan 1,3-beta-glucosidase D (exgD).